The chain runs to 679 residues: Stress-70 protein, mitochondrial (679 aa).

The N-terminal 46 residues, 1–46 (MISASRAAVSRFVGTAASRGPTAARHQDGWNGLSHEAFRIVSRRDY), are a transit peptide targeting the mitochondrion. The segment at 1–432 (MISASRAAVS…IQGGVLAGDV (432 aa)) is interaction with NFS1. ADP is bound by residues T63 and N64. Residues 63-431 (TNSCVAVMEG…AIQGGVLAGD (369 aa)) form a nucleotide-binding domain (NBD) region. N6-acetyllysine is present on K76. T87 bears the Phosphothreonine mark. N6-acetyllysine; alternate occurs at positions 135 and 138. K135 and K138 each carry N6-succinyllysine; alternate. At K143 the chain carries N6-acetyllysine. The residue at position 206 (K206) is an N6-acetyllysine; alternate. K206 is subject to N6-succinyllysine; alternate. N6-malonyllysine; alternate is present on K206. N6-acetyllysine is present on residues K234 and K288. An N6-acetyllysine; alternate modification is found at K300. Position 300 is an N6-succinyllysine; alternate (K300). ADP contacts are provided by E313, K316, and S320. Position 368 is an N6-succinyllysine (K368). Residues G388 and R391 each coordinate ADP. Position 394 is an N6-succinyllysine (K394). S408 is modified (phosphoserine). The segment at 432-441 (VTDVLLLDVT) is interdomain linker. An interaction with FXN and ISCU region spans residues 432-679 (VTDVLLLDVT…QKDNQKEEKQ (248 aa)). The substrate-binding domain (SBD) stretch occupies residues 442–679 (PLSLGIETLG…QKDNQKEEKQ (238 aa)). R513 is subject to Omega-N-methylarginine. N6-acetyllysine; alternate occurs at positions 567 and 600. 2 positions are modified to N6-succinyllysine; alternate: K567 and K600. At K610 the chain carries N6-succinyllysine. The residue at position 612 (K612) is an N6-acetyllysine. K646 is subject to N6-acetyllysine; alternate. K646 is modified (N6-succinyllysine; alternate). The tract at residues 656-679 (ASEREGSGSSGTGEQKDNQKEEKQ) is disordered. Over residues 669-679 (EQKDNQKEEKQ) the composition is skewed to basic and acidic residues.

It belongs to the heat shock protein 70 family. In terms of assembly, interacts strongly with the intermediate form of FXN and weakly with its mature form. Interacts with HSCB. Associates with the mitochondrial contact site and cristae organizing system (MICOS) complex, composed of at least MICOS10/MIC10, CHCHD3/MIC19, CHCHD6/MIC25, APOOL/MIC27, IMMT/MIC60, APOO/MIC23/MIC26 and QIL1/MIC13. This complex was also known under the names MINOS or MitOS complex. The MICOS complex associates with mitochondrial outer membrane proteins SAMM50, MTX1, MTX2 and DNAJC11, mitochondrial inner membrane protein TMEM11 and with HSPA9. Interacts with DNLZ, the interaction is required to prevent self-aggregation. Interacts with TESPA1. Interacts with PDPN. Interacts with NFU1, NFS1 and ISCU. Interacts with TP53; the interaction promotes TP53 degradation. Interacts (via SBD domain) with UBXN2A; the interaction with UBXN2A inhibits HSPA9/MOT-2 interaction with and degradation of TP53, thereby promotes TP53 translocation to the nucleus. Interacts with ITPR1 AND VDAC1; this interaction couples ITPR1 to VDAC1. Component of the TIM23 mitochondrial inner membrane pre-sequence translocase complex.

It is found in the mitochondrion. The protein localises to the nucleus. The protein resides in the nucleolus. Its subcellular location is the cytoplasm. It localises to the mitochondrion matrix. It carries out the reaction ATP + H2O = ADP + phosphate + H(+). With respect to regulation, the chaperone activity is regulated by ATP-induced allosteric coupling of the nucleotide-binding (NBD) and substrate-binding (SBD) domains. ATP binding in the NBD leads to a conformational change in the NBD, which is transferred through the interdomain linker (IDL) to the substrate-binding domain (SBD). This elicits a reduced substrate affinity and a faster substrate exchange rate. Upon hydrolysis of ATP to ADP, the protein undergoes a conformational change that increases its affinity for substrate proteins. It cycles through repeated phases of ATP hydrolysis and nucleotide exchange, facilitating repeated cycles of substrate binding and release. Functions in collaboration with co-chaperones. Functions with the co-chaperone, DNLZ, to maintain solubility and regulate ATP hydrolysis. Nucleotide exchange factors, GRPEL1 and GRPEL2, accelerate nucleotide exchange. Its function is as follows. Mitochondrial chaperone that plays a key role in mitochondrial protein import, folding, and assembly. Plays an essential role in the protein quality control system, the correct folding of proteins, the re-folding of misfolded proteins, and the targeting of proteins for subsequent degradation. These processes are achieved through cycles of ATP binding, ATP hydrolysis, and ADP release, mediated by co-chaperones. In mitochondria, it associates with the TIM (translocase of the inner membrane) protein complex to assist in the import and folding of mitochondrial proteins. Plays an important role in mitochondrial iron-sulfur cluster (ISC) biogenesis, interacts with and stabilizes ISC cluster assembly proteins FXN, NFU1, NFS1 and ISCU. Regulates erythropoiesis via stabilization of ISC assembly. Regulates mitochondrial calcium-dependent apoptosis by coupling two calcium channels, ITPR1 and VDAC1, at the mitochondria-associated endoplasmic reticulum (ER) membrane to facilitate calcium transport from the ER lumen to the mitochondria intermembrane space, providing calcium for the downstream calcium channel MCU, which releases it into the mitochondrial matrix. Although primarily located in the mitochondria, it is also found in other cellular compartments. In the cytosol, it associates with proteins involved in signaling, apoptosis, or senescence. It may play a role in cell cycle regulation via its interaction with and promotion of degradation of TP53. May play a role in the control of cell proliferation and cellular aging. Protects against reactive oxygen species (ROS). Extracellular HSPA9 plays a cytoprotective role by preventing cell lysis following immune attack by the membrane attack complex by disrupting formation of the complex. The sequence is that of Stress-70 protein, mitochondrial from Bos taurus (Bovine).